The sequence spans 342 residues: Tryptophan--tRNA ligase (342 aa).

Residues 19–21 (QPS) and 27–28 (GN) contribute to the ATP site. A 'HIGH' region motif is present at residues 20–28 (PSGELTIGN). Asp-143 contributes to the L-tryptophan binding site. ATP contacts are provided by residues 155–157 (GED), Val-194, and 203–207 (KMSKS). Positions 203 to 207 (KMSKS) match the 'KMSKS' region motif.

This sequence belongs to the class-I aminoacyl-tRNA synthetase family. As to quaternary structure, homodimer.

The protein resides in the cytoplasm. It catalyses the reaction tRNA(Trp) + L-tryptophan + ATP = L-tryptophyl-tRNA(Trp) + AMP + diphosphate + H(+). Catalyzes the attachment of tryptophan to tRNA(Trp). The protein is Tryptophan--tRNA ligase of Yersinia pestis.